Consider the following 453-residue polypeptide: Malate dehydrogenase [NADP], chloroplastic (453 aa).

Residues 1–68 (MAVVKLSPWA…RLSSPASIRC (68 aa)) constitute a chloroplast transit peptide. Residues Cys-88 and Cys-93 are joined by a disulfide bond. 117 to 123 (GAAGMIS) is an NADP(+) binding site. 2 residues coordinate substrate: Arg-198 and Arg-204. Residues Asn-211, Gln-218, and 235-237 (VGN) each bind NADP(+). Residues Asn-237 and Arg-268 each contribute to the substrate site. The active-site Proton acceptor is the His-293. The cysteines at positions 429 and 441 are disulfide-linked.

It belongs to the LDH/MDH superfamily. MDH type 2 family. As to quaternary structure, homodimer.

Its subcellular location is the plastid. It localises to the chloroplast. The catalysed reaction is (S)-malate + NADP(+) = oxaloacetate + NADPH + H(+). With respect to regulation, chloroplast NADP-MDH is activated upon illumination. In order to be enzymatically active, disulfide bridges on the protein must be reduced by thioredoxin which receives electrons from ferredoxin and the electron transport system of photosynthesis. Its function is as follows. The chloroplastic, NADP-dependent form is essential for the photosynthesis C4 cycle, which allows plants to circumvent the problem of photorespiration. In C4 plants, NADP-MDH activity acts to convert oxaloacetate to malate in chloroplasts of mesophyll cells for transport to the bundle sheath cells. The chain is Malate dehydrogenase [NADP], chloroplastic from Flaveria bidentis (Coastal plain yellowtops).